We begin with the raw amino-acid sequence, 126 residues long: Probable cystatin-16 (126 aa).

Positions 1–20 (MFLKATLLLGLAVLGMHVWA) are cleaved as a signal peptide. A disulfide bond links Cys84 and Cys94. A glycan (N-linked (GlcNAc...) asparagine) is linked at Asn106.

This sequence belongs to the cystatin family.

The protein localises to the secreted. This chain is Probable cystatin-16, found in Bos taurus (Bovine).